Here is a 555-residue protein sequence, read N- to C-terminus: Vacuolar fusion protein MON1 homolog A (555 aa).

The span at 1 to 12 shows a compositional bias: basic and acidic residues; sequence MAADMQRKRSSE. Residues 1–87 form a disordered region; the sequence is MAADMQRKRS…RGPPPLPADM (87 aa). Residues serine 31 and serine 56 each carry the phosphoserine modification. The residue at position 61 (threonine 61) is a Phosphothreonine. Serine 91 is subject to Phosphoserine. The interval 114–147 is disordered; the sequence is PGSSEDWLDPPGAVGRPATEPPREGTAEGDEEDA.

It belongs to the MON1/SAND family. In terms of assembly, interacts with CCZ1. Found in a complex with RMC1, CCZ1, MON1A and MON1B. The MON1A-CCZ1B complex interacts with RIMOC1. The MON1A-CCZ1B complex interacts with RAB7A and this interaction is enhanced in the presence of RIMOC1.

Plays an important role in membrane trafficking through the secretory apparatus. Not involved in endocytic trafficking to lysosomes. Acts in concert with CCZ1, as a guanine exchange factor (GEF) for RAB7, promotes the exchange of GDP to GTP, converting it from an inactive GDP-bound form into an active GTP-bound form. This Macaca fascicularis (Crab-eating macaque) protein is Vacuolar fusion protein MON1 homolog A (MON1A).